The chain runs to 263 residues: tRNA pseudouridine synthase A (263 aa).

Residue D57 is the Nucleophile of the active site. Position 115 (Y115) interacts with substrate.

Belongs to the tRNA pseudouridine synthase TruA family. In terms of assembly, homodimer.

It catalyses the reaction uridine(38/39/40) in tRNA = pseudouridine(38/39/40) in tRNA. Functionally, formation of pseudouridine at positions 38, 39 and 40 in the anticodon stem and loop of transfer RNAs. This is tRNA pseudouridine synthase A from Buchnera aphidicola subsp. Schizaphis graminum (strain Sg).